We begin with the raw amino-acid sequence, 253 residues long: Small ribosomal subunit protein uS3 (253 aa).

In terms of domain architecture, KH type-2 spans 21 to 92 (LNEFLTRELA…SVELYAEKVA (72 aa)). The disordered stretch occupies residues 211 to 253 (VEPKDEILPTTPISEQKGGKPDPQVPQQPPQQPPAMPPPVPTA). The span at 233-253 (PQVPQQPPQQPPAMPPPVPTA) shows a compositional bias: pro residues.

It belongs to the universal ribosomal protein uS3 family.

Its subcellular location is the cytoplasm. It is found in the nucleus. The protein resides in the nucleolus. It localises to the mitochondrion inner membrane. The protein localises to the cytoskeleton. Its subcellular location is the spindle. The enzyme catalyses 2'-deoxyribonucleotide-(2'-deoxyribose 5'-phosphate)-2'-deoxyribonucleotide-DNA = a 3'-end 2'-deoxyribonucleotide-(2,3-dehydro-2,3-deoxyribose 5'-phosphate)-DNA + a 5'-end 5'-phospho-2'-deoxyribonucleoside-DNA + H(+). Its function is as follows. Component of the small ribosomal subunit. The ribosome is a large ribonucleoprotein complex responsible for the synthesis of proteins in the cell. Has endonuclease activity and plays a role in repair of damaged DNA. Also involved in other processes including regulation of transcription, translation of its cognate mRNA, spindle formation and chromosome movement during mitosis, and apoptosis. The sequence is that of Small ribosomal subunit protein uS3 (RPS3) from Ambystoma mexicanum (Axolotl).